Consider the following 20-residue polypeptide: Alpha-amylase (20 aa).

The catalysed reaction is Endohydrolysis of (1-&gt;4)-alpha-D-glucosidic linkages in polysaccharides containing three or more (1-&gt;4)-alpha-linked D-glucose units.. With respect to regulation, strongly inhibited by Hg (2+). Inhibited by Zn (2+). Activated by Fe (2+), Mg (2+) and Ba (2+). Its function is as follows. Alpha-amylase active towards amylose, starch, amylopectin and maltodextrins. Has lower activity towards glycogen, and is not active towards alpha/beta-cyclodextrin. The sequence is that of Alpha-amylase from Bacillus sp.